Reading from the N-terminus, the 219-residue chain is UPF0502 protein Gura_0277 (219 aa).

It belongs to the UPF0502 family.

The polypeptide is UPF0502 protein Gura_0277 (Geotalea uraniireducens (strain Rf4) (Geobacter uraniireducens)).